A 357-amino-acid chain; its full sequence is Homoserine kinase (357 aa).

The protein belongs to the GHMP kinase family. Homoserine kinase subfamily. In terms of assembly, homodimer.

It catalyses the reaction L-homoserine + ATP = O-phospho-L-homoserine + ADP + H(+). Its pathway is amino-acid biosynthesis; L-threonine biosynthesis; L-threonine from L-aspartate: step 4/5. In terms of biological role, commits homoserine to the threonine biosynthesis pathway by catalyzing its O-phosphorylation. The chain is Homoserine kinase (THR1) from Candida albicans (strain SC5314 / ATCC MYA-2876) (Yeast).